A 219-amino-acid polypeptide reads, in one-letter code: Leukocyte surface antigen CD53 (219 aa).

The Cytoplasmic portion of the chain corresponds to 1–11 (MGMSSLKLLKF). The helical transmembrane segment at 12–32 (VLFFFNLIFWFCGCCILGLGI) threads the bilayer. The Extracellular segment spans residues 33–54 (YLLIHSKFGVLFHNLPSLTLGN). The helical transmembrane segment at 55–69 (VLVIVGSVIMVVAFL) threads the bilayer. Over 70-80 (GCMGSIKENKC) the chain is Cytoplasmic. A helical transmembrane segment spans residues 81-106 (LLMSFFVLLLIILLAEVTLAILLFVY). Over 107-181 (EQKLKEYVAE…IQAKQWFHSN (75 aa)) the chain is Extracellular. Asn129 and Asn148 each carry an N-linked (GlcNAc...) asparagine glycan. A helical transmembrane segment spans residues 182–206 (FLYIGITTICVCVIQVLGMSFALTL). Topologically, residues 207 to 219 (NCQIDKTSQVLGL) are cytoplasmic.

The protein belongs to the tetraspanin (TM4SF) family. Interacts with SCIMP. Interacts with CD45/PTPRC. Interacts with IL7R. Interacts with RBL2 and PPP2CA.

It localises to the cell membrane. It is found in the cell junction. The protein resides in the membrane. The protein localises to the synapse. Its function is as follows. Structural component of specialized membrane microdomains known as tetraspanin-enriched microdomains (TERMs), which act as platforms for receptor clustering and signaling. Participates thereby in diverse biological functions such as cell signal transduction, adhesion, migration and protein trafficking. Plays a role in the activation of monocytes and B-cells. Acts as an essential regulator of B-cell development by promoting interleukin-7 receptor/IL7R signaling. Also promotes, in B-cells, the BCR signaling by recruiting PKC to the plasma membrane in order to phosphorylate its substrates. Plays an essential role in B- and T-cells homing to lymph nodes by stabilizing L-selectin/SELL cell surface expression. Also mediates metabolic and inflammatory functions in hepatocytes and adipose tissue by promoting TNF-alpha and LPS signaling independent of the immune compartment. The sequence is that of Leukocyte surface antigen CD53 (CD53) from Bos taurus (Bovine).